The sequence spans 427 residues: Beta-porphyranase D (427 aa).

A signal peptide spans 1–19 (MILKQAILTLVLVNANLFA). A disordered region spans residues 23-45 (PKTYSSTDKETRQGPPKPPMGKR). The region spanning 32-308 (ETRQGPPKPP…WVRAYRLVDV (277 aa)) is the GH16 domain. The substrate site is built by Trp-73, Arg-76, Glu-168, Glu-173, and Glu-272. The active-site Nucleophile is the Glu-168. The active-site Proton donor is the Glu-173.

This sequence belongs to the glycosyl hydrolase 16 family.

The protein resides in the periplasm. The catalysed reaction is Hydrolysis of beta-D-galactopyranose-(1-&gt;4)-alpha-L-galactopyranose-6-sulfate linkages in porphyran.. Functionally, cleaves the sulfated polysaccharide porphyran at the (1-&gt;4) linkages between beta-D-galactopyranose and alpha-L-galactopyranose-6-sulfate, forming mostly the disaccharide alpha-L-galactopyranose-6-sulfate-(1-&gt;3)-beta-D-galactose. The chain is Beta-porphyranase D (porD) from Zobellia galactanivorans (strain DSM 12802 / CCUG 47099 / CIP 106680 / NCIMB 13871 / Dsij).